Reading from the N-terminus, the 349-residue chain is Vacuolar protein sorting-associated protein 26 (349 aa).

Residues 299–349 (GVTKPGLPGSTNNNNNNNTSNTNNTNTPQQKVTESQNEVPEPENNSSDESD) form a disordered region. Positions 308-325 (STNNNNNNNTSNTNNTNT) are enriched in low complexity. The span at 326–343 (PQQKVTESQNEVPEPENN) shows a compositional bias: polar residues.

It belongs to the VPS26 family. In terms of assembly, component of a retromer subcomplex consisting of vps29, vps26 and vps35.

The protein resides in the membrane. Functionally, plays a role in vesicular protein sorting. Component of the membrane-associated retromer complex which is essential in endosome-to-Golgi retrograde transport. The vps29-vps26-vps35 subcomplex may be involved in cargo selection. The polypeptide is Vacuolar protein sorting-associated protein 26 (vps26) (Dictyostelium discoideum (Social amoeba)).